The chain runs to 306 residues: Protoheme IX farnesyltransferase (306 aa).

Transmembrane regions (helical) follow at residues 32-52 (VVQLIVFCAFIGMVLAVPGMP), 57-77 (WALMAVASAGIWLVAGAAAAF), 108-128 (LLFSALLCAAGSALLYWWVNP), 129-149 (LTMWLTFATFVGYAVIYTVIL), 157-177 (IVIGGASGAMPPVLGWAAMTG), 183-203 (ALILFLIIFLWTPPHFWALAL), 230-250 (VFLYTLILFAGCLMPFVYGMS), 252-272 (WIYLAAAVVLSAGFCLYGFRL), and 285-305 (FRFSLIHLSLLFAALLVDHYL).

The protein belongs to the UbiA prenyltransferase family. Protoheme IX farnesyltransferase subfamily.

It is found in the cell inner membrane. The enzyme catalyses heme b + (2E,6E)-farnesyl diphosphate + H2O = Fe(II)-heme o + diphosphate. It participates in porphyrin-containing compound metabolism; heme O biosynthesis; heme O from protoheme: step 1/1. Its function is as follows. Converts heme B (protoheme IX) to heme O by substitution of the vinyl group on carbon 2 of heme B porphyrin ring with a hydroxyethyl farnesyl side group. The polypeptide is Protoheme IX farnesyltransferase (Acidovorax ebreus (strain TPSY) (Diaphorobacter sp. (strain TPSY))).